We begin with the raw amino-acid sequence, 170 residues long: Large ribosomal subunit protein uL10 (170 aa).

The protein belongs to the universal ribosomal protein uL10 family. Part of the ribosomal stalk of the 50S ribosomal subunit. The N-terminus interacts with L11 and the large rRNA to form the base of the stalk. The C-terminus forms an elongated spine to which L12 dimers bind in a sequential fashion forming a multimeric L10(L12)X complex.

Its function is as follows. Forms part of the ribosomal stalk, playing a central role in the interaction of the ribosome with GTP-bound translation factors. The sequence is that of Large ribosomal subunit protein uL10 from Lactobacillus acidophilus (strain ATCC 700396 / NCK56 / N2 / NCFM).